The chain runs to 67 residues: Transcription elongation factor Spt4 (67 aa).

Residues Cys7, Cys10, Cys19, and Cys22 each coordinate Zn(2+).

The protein belongs to the archaeal Spt4 family. In terms of assembly, heterodimer composed of Spt4 and Spt5. Interacts with RNA polymerase (RNAP). The complex interacts with FttA.

It localises to the chromosome. The Stp4-Spt5 complex stimulates transcription elongation on both naked DNA and histone-bound DNA (chromatin), facilitating transcription through the histone barrier. Neither protein functions alone. The complex also stimulates the transcription termination activity of FttA, neither protein alone stimulates FttA-dependent termination. In Thermococcus kodakarensis (strain ATCC BAA-918 / JCM 12380 / KOD1) (Pyrococcus kodakaraensis (strain KOD1)), this protein is Transcription elongation factor Spt4.